A 773-amino-acid polypeptide reads, in one-letter code: Cadherin-5 (773 aa).

The first 18 residues, 1–18 (MKKLILLFSLFLAPAFSY), serve as a signal peptide directing secretion. Positions 19-40 (KENQKINQNFSSNNTSHKRLKR) are excised as a propeptide. 3 N-linked (GlcNAc...) asparagine glycosylation sites follow: asparagine 27, asparagine 31, and asparagine 32. Cadherin domains follow at residues 39–144 (KRDW…APIF), 145–251 (VQKI…FPVF), 252–366 (KHPS…PPVF), 367–474 (TKLS…APEL), and 474–582 (LVYP…DFTF). Residues 41–595 (DWIWNRMHIR…RAKQVGVSVQ (555 aa)) lie on the Extracellular side of the membrane. The Ca(2+) site is built by glutamate 51, glutamate 52, aspartate 102, and glutamate 104. Asparagine 121 carries an N-linked (GlcNAc...) asparagine glycan. Aspartate 136, isoleucine 137, asparagine 138, aspartate 139, and asparagine 140 together coordinate Ca(2+). An N-linked (GlcNAc...) asparagine glycan is attached at asparagine 150. Ca(2+)-binding residues include aspartate 170, aspartate 172, histidine 179, and aspartate 224. N-linked (GlcNAc...) asparagine glycans are attached at residues asparagine 263, asparagine 437, asparagine 519, and asparagine 531. The chain crosses the membrane as a helical span at residues 596–617 (ALVAIFICIFTIIAVIALLILL). At 618-773 (RKRHKKDLSG…GSEPNEDFVY (156 aa)) the chain is on the cytoplasmic side.

Post-translationally, N-glycosylated. In terms of processing, O-glycosylated.

It is found in the cell junction. Its subcellular location is the adherens junction. The protein resides in the cell membrane. The protein localises to the cytoplasm. Its function is as follows. Cadherins are calcium-dependent cell adhesion proteins. They preferentially interact with themselves in a homophilic manner in connecting cells; cadherins may thus contribute to the sorting of heterogeneous cell types. This cadherin may play a important role in endothelial cell biology through control of the cohesion and organization of the intercellular junctions. Plays a role in coupling actin fibers to cell junctions in endothelial cells. Associates with CTNND1/p120-catenin to control CADH5 endocytosis. In Gallus gallus (Chicken), this protein is Cadherin-5.